The primary structure comprises 368 residues: Protein RecA (368 aa).

72–79 (GNESSGKT) is a binding site for ATP.

Belongs to the RecA family.

It localises to the cytoplasm. Can catalyze the hydrolysis of ATP in the presence of single-stranded DNA, the ATP-dependent uptake of single-stranded DNA by duplex DNA, and the ATP-dependent hybridization of homologous single-stranded DNAs. It interacts with LexA causing its activation and leading to its autocatalytic cleavage. This chain is Protein RecA, found in Petrotoga mobilis (strain DSM 10674 / SJ95).